The following is a 373-amino-acid chain: Outer membrane protein C (373 aa).

The N-terminal stretch at 1-21 (MKVKVLSLLVPALLVAGAANA) is a signal peptide. A run of 5 beta stranded transmembrane segments spans residues 34 to 42 (LYGKVDGLH), 54 to 63 (QTYMRLGFKG), 74 to 84 (YGQWEYQIQGN), 92 to 101 (SWTRVAFAGL), and 107 to 115 (GSFDYGRNY). The segment at 116-133 (GVVYDVTSWTDVLPEFGG) is loop L3; may constrict the pore. 11 beta stranded membrane passes run 142–154 (MQQR…TYRS), 164–171 (LNFAVQYQ), 197–203 (VGGSITY), 208–215 (FGIGAAVS), 244–250 (YTGGLKY), 255–262 (IYLAAQYT), 272–288 (NLGW…VAQY), 294–301 (LRPSLAYL), 325–332 (VDVGATYY), 337–344 (MSTYVDYK), and 365–372 (VALGLVYQ).

Belongs to the Gram-negative porin family. As to quaternary structure, homotrimer. Forms mixed heterotrimers with OmpF and with PhoE; other mixed heterotrimers are also probable. (Microbial infection) Upon infection with phage Sf6 associates with the mature bacteriophage capsid. Was originally suggested to be within the bacteriophage capsid. This has been disproven.

It is found in the cell outer membrane. The protein localises to the extracellular vesicle. Functionally, forms pores that allow passive diffusion of small molecules across the outer membrane. In terms of biological role, (Microbial infection) Serves as a less-preferential secondary receptor during phage Sf6 infection; infection requires both lipopolysaccharide (LPS) and (in the absence of OmpA) OmpC can serve as the secondary receptor. This chain is Outer membrane protein C (ompC), found in Shigella flexneri.